A 116-amino-acid chain; its full sequence is Carbohydrate-binding protein AQN-3 (116 aa).

A disulfide bridge links Cys-9 with Cys-30. The CUB domain maps to 9–110; that stretch reads CGGFLKNYSG…SSFNVYFYGI (102 aa). Residue Asn-50 is glycosylated (N-linked (GlcNAc...) asparagine). A disulfide bridge links Cys-53 with Cys-74. At His-85 the chain carries Methylhistidine.

Belongs to the spermadhesin family. In terms of processing, the residue at position 85 was identified as a methylhistidine by mass spectrometry.

It is found in the secreted. Functionally, AQN proteins mediate the binding of boar spermatozoa to component(s) of the egg's zona pellucida by a carbohydrate-binding mechanism. AQN proteins are secretory components of the male accessory glands being coated to the sperm surface at the time of ejaculation. They possess as well heparin-, serine-protease-inhibitor-binding capability. This is Carbohydrate-binding protein AQN-3 from Sus scrofa (Pig).